The following is a 468-amino-acid chain: Methionine aminopeptidase 2 (468 aa).

Basic and acidic residues predominate over residues 1-10 (MGSKTFEGEG). Residues 1–106 (MGSKTFEGEG…PPRVPLDDLF (106 aa)) are disordered. Residues 16-25 (DPSNSTSPNS) are compositionally biased toward polar residues. The span at 31–40 (RGAHLSRDGD) shows a compositional bias: basic and acidic residues. The span at 46–56 (GDGDDGADGDE) shows a compositional bias: acidic residues. A compositionally biased stretch (polar residues) spans 61–75 (VTTTPLTEQQPSSET). Over residues 78-90 (KKKKRRKPKKKIS) the composition is skewed to basic residues. Histidine 219 contacts substrate. Positions 240, 251, and 320 each coordinate a divalent metal cation. Substrate is bound at residue histidine 328. A divalent metal cation contacts are provided by glutamate 353 and glutamate 449.

Belongs to the peptidase M24A family. Methionine aminopeptidase eukaryotic type 2 subfamily. It depends on Co(2+) as a cofactor. Zn(2+) is required as a cofactor. Requires Mn(2+) as cofactor. Fe(2+) serves as cofactor.

It is found in the cytoplasm. It catalyses the reaction Release of N-terminal amino acids, preferentially methionine, from peptides and arylamides.. In terms of biological role, cotranslationally removes the N-terminal methionine from nascent proteins. The N-terminal methionine is often cleaved when the second residue in the primary sequence is small and uncharged (Met-Ala-, Cys, Gly, Pro, Ser, Thr, or Val). The protein is Methionine aminopeptidase 2 of Aspergillus oryzae (strain ATCC 42149 / RIB 40) (Yellow koji mold).